A 497-amino-acid polypeptide reads, in one-letter code: Zinc finger protein ZIC 2-B (497 aa).

Disordered regions lie at residues 58–107 (HMGA…TSQA) and 143–180 (SAAAGGGQHGLFGPPAGSLHHHPHHHHQLSHGEHPQGH). Residues 66–88 (PGGGSGGGSGGGGGAGPNGGAGA) are compositionally biased toward gly residues. A compositionally biased stretch (polar residues) spans 97-107 (PGQTSAFTSQA). The segment covering 161 to 171 (LHHHPHHHHQL) has biased composition (basic residues). A C2H2-type 1; atypical zinc finger spans residues 273 to 308 (LICKWIDPEQLNNPKKSCNKTFSTMHELVTHMSVEH). Residues 317–344 (HICFWEECAREGKPFKAKYKLVNHIRVH) form a C2H2-type 2; atypical zinc finger. C2H2-type zinc fingers lie at residues 350–374 (FPCPFPGCGKVFARSENLKIHKRTH), 380–404 (FQCEFEGCDRRFANSSDRKKHMHVH), and 410–432 (YLCKMCDKSYTHPSSLRKHMKVH). A disordered region spans residues 423–473 (SSLRKHMKVHESSPQGSESSPAASSGYESSTPPGLVSPNSETQNPNLSPAA). The segment covering 434 to 452 (SSPQGSESSPAASSGYESS) has biased composition (low complexity). A compositionally biased stretch (polar residues) spans 459-469 (SPNSETQNPNL).

It belongs to the GLI C2H2-type zinc-finger protein family.

It is found in the nucleus. The protein resides in the cytoplasm. In terms of biological role, transcriptional repressor that inhibits neurogenesis and induces neural and neural crest differentiation. Regulates anteroposterior patterning in early development by inhibiting expression of the nodal genes through the inhibition of vegt. Required for gastrulation movements and for proper anterior neural and axial development. May also act as a transcriptional activator. May bind to the minimal GLI-consensus sequence 5'-TGGGTGGTC-3'. This Xenopus laevis (African clawed frog) protein is Zinc finger protein ZIC 2-B (zic2-b).